We begin with the raw amino-acid sequence, 135 residues long: Flagellar assembly factor FliW 2 (135 aa).

This sequence belongs to the FliW family. In terms of assembly, interacts with translational regulator CsrA and flagellin(s).

It localises to the cytoplasm. Acts as an anti-CsrA protein, binds CsrA and prevents it from repressing translation of its target genes, one of which is flagellin. Binds to flagellin and participates in the assembly of the flagellum. The chain is Flagellar assembly factor FliW 2 from Helicobacter acinonychis (strain Sheeba).